Reading from the N-terminus, the 902-residue chain is Glutamate receptor 4 (902 aa).

A signal peptide spans 1–20; the sequence is MRIICRQIVLLFSGFWGLAM. Residues 22–544 lie on the Extracellular side of the membrane; that stretch reads AFPSSVQIGG…GVFSFLDPLA (523 aa). Residues Asn52, Asn56, Asn258, Asn371, Asn407, and Asn414 are each glycosylated (N-linked (GlcNAc...) asparagine). A disulfide bridge links Cys84 with Cys331. L-glutamate contacts are provided by Pro500, Thr502, and Arg507. Residues 545–565 form a helical membrane-spanning segment; that stretch reads YEIWMCIVFAYIGVSVVLFLV. Topologically, residues 566-592 are cytoplasmic; it reads SRFSPYEWHTEEPEDGKEGPSDQPPNE. The helical; Pore-forming intramembrane region spans 593-608; that stretch reads FGIFNSLWFSLGAFMQ. An intramembrane segment occupies 609-611; it reads QGC. Residue Cys611 is the site of S-palmitoyl cysteine attachment. The Cytoplasmic portion of the chain corresponds to 612-617; that stretch reads DISPRS. A helical transmembrane segment spans residues 618-638; it reads LSGRIVGGVWWFFTLIIISSY. The Extracellular segment spans residues 639–813; sequence TANLAAFLTV…DKTSALSLSN (175 aa). Residues Ser676, Thr677, and Glu727 each coordinate L-glutamate. A disulfide bridge links Cys740 with Cys795. The chain crosses the membrane as a helical span at residues 814-834; the sequence is VAGVFYILVGGLGLAMLVALI. At 835-902 the chain is on the cytoplasmic side; the sequence is EFCYKSRAEA…GLAVIASDLP (68 aa). Cys837 carries S-palmitoyl cysteine lipidation. Ser862 carries the post-translational modification Phosphoserine.

This sequence belongs to the glutamate-gated ion channel (TC 1.A.10.1) family. GRIA4 subfamily. In terms of assembly, homotetramer or heterotetramer of pore-forming glutamate receptor subunits. Tetramers may be formed by the dimerization of dimers. Interacts with EPB41L1 via its C-terminus. Isoform 3 interacts with PICK1. Found in a complex with GRIA1, GRIA2, GRIA3, CNIH2, CNIH3, CACNG2, CACNG3, CACNG4, CACNG5, CACNG7 and CACNG8. Interacts with CACNG5 and PRKCG. Found in a complex with GRIA1, GRIA2, GRIA3, DLG4, CACNG8 and CNIH2. In terms of processing, palmitoylated. Depalmitoylated upon L-glutamate stimulation. ZDHHC3/GODZ specifically palmitoylates Cys-611, which leads to Golgi retention and decreased cell surface expression. In contrast, Cys-837 palmitoylation does not affect cell surface expression but regulates stimulation-dependent endocytosis. Phosphorylated at Ser-862 by PRKCG; phosphorylation increases plasma membrane-associated GRI4 expression.

Its subcellular location is the cell membrane. It localises to the postsynaptic cell membrane. The protein resides in the cell projection. The protein localises to the dendrite. The catalysed reaction is Ca(2+)(in) = Ca(2+)(out). It carries out the reaction Na(+)(in) = Na(+)(out). It catalyses the reaction Mg(2+)(in) = Mg(2+)(out). Its function is as follows. Ionotropic glutamate receptor that functions as a ligand-gated cation channel, gated by L-glutamate and glutamatergic agonists such as alpha-amino-3-hydroxy-5-methyl-4-isoxazolepropionic acid (AMPA), quisqualic acid, and kainic acid. L-glutamate acts as an excitatory neurotransmitter at many synapses in the central nervous system and plays an important role in fast excitatory synaptic transmission. Binding of the excitatory neurotransmitter L-glutamate induces a conformation change, leading to the opening of the cation channel, and thereby converts the chemical signal to an electrical impulse upon entry of monovalent and divalent cations such as sodium and calcium. The receptor then desensitizes rapidly and enters a transient inactive state, characterized by the presence of bound agonist. In the presence of CACNG8, shows resensitization which is characterized by a delayed accumulation of current flux upon continued application of L-glutamate. The polypeptide is Glutamate receptor 4 (Mus musculus (Mouse)).